Reading from the N-terminus, the 375-residue chain is uncharacterized protein (375 aa).

The Cytoplasmic segment spans residues Met1–Arg2. A helical; Signal-anchor for type II membrane protein membrane pass occupies residues Trp3–Trp23. The Lumenal portion of the chain corresponds to Asn24–Pro375.

The protein belongs to the glycosyltransferase 34 family.

It localises to the endoplasmic reticulum membrane. Its subcellular location is the golgi apparatus membrane. This is an uncharacterized protein from Schizosaccharomyces pombe (strain 972 / ATCC 24843) (Fission yeast).